The following is a 223-amino-acid chain: Methanol utilization control regulatory protein MoxX (223 aa).

In terms of domain architecture, Response regulatory spans 16–133 (QILIVDDHPV…EICAAFTEVA (118 aa)). The 66-residue stretch at 155-220 (PGTSAPRLTG…DLVVKGIRYF (66 aa)) folds into the HTH luxR-type domain. The segment at residues 179-198 (YRDIADRACISYKTVSNVSL) is a DNA-binding region (H-T-H motif).

In terms of processing, phosphorylated by MoxY.

It is found in the cytoplasm. In terms of biological role, member of the two-component regulatory system MoxY/MoxX probably involved in the regulation of the methanol dehydrogenase expression. The polypeptide is Methanol utilization control regulatory protein MoxX (moxX) (Paracoccus denitrificans).